The following is a 259-amino-acid chain: Ras-related protein Rab-34 (259 aa).

The residue at position 1 (M1) is an N-acetylmethionine. Residues S62, V63, G64, K65, T66, D78, Y81, and T84 each coordinate GTP. Residue T66 participates in Mg(2+) binding. The Switch 1 motif lies at 71 to 89 (RFCKDTFDKNYKATIGVDF). 2 residues coordinate Mg(2+): T84 and D107. Positions 108–127 (TAGQERFKCIASTYYRGAQA) match the Switch 2 motif. G110, K167, D169, and S198 together coordinate GTP. S241 carries the phosphoserine modification. 2 S-geranylgeranyl cysteine lipidation sites follow: C257 and C258.

The protein belongs to the small GTPase superfamily. Rab family. In terms of assembly, interacts with RILP. The GTP-bound form interacts with REP15. Mg(2+) is required as a cofactor.

It is found in the cytoplasm. It localises to the golgi apparatus. Its subcellular location is the cytoplasmic vesicle. The protein resides in the phagosome. The protein localises to the phagosome membrane. It is found in the cell projection. It localises to the cilium. Its subcellular location is the cytoskeleton. The protein resides in the microtubule organizing center. The protein localises to the centrosome. It is found in the centriole. The catalysed reaction is GTP + H2O = GDP + phosphate + H(+). With respect to regulation, regulated by guanine nucleotide exchange factors (GEFs) which promote the exchange of bound GDP for free GTP. Regulated by GTPase activating proteins (GAPs) which increase the GTP hydrolysis activity. Inhibited by GDP dissociation inhibitors (GDIs). Functionally, the small GTPases Rab are key regulators of intracellular membrane trafficking, from the formation of transport vesicles to their fusion with membranes. Rabs cycle between an inactive GDP-bound form and an active GTP-bound form that is able to recruit to membranes different sets of downstream effectors directly responsible for vesicle formation, movement, tethering and fusion. RAB34 transports protein involved in the redistribution of lysosomes to the peri-Golgi region. Plays a role in the maturation of phagosomes that engulf pathogens, such as S.aureus and M.tuberculosis. Plays a role in the fusion of phagosomes with lysosomes. Required for the early steps of intracellular ciliogenesis, the cilium assembly pathway initiated by trafficking and docking of ciliary vesicles to the centrioles in the cytoplasm, followed by axoneme formation in the cytoplasm. After axoneme elongation, the centrioles migrate close to the cell surface so that ciliary vesicles can fuse with the plasma membrane to expose cilia to the extracellular space. It seems dispensable for ciliogenesis via the extracellular pathway where cilium assembly begins after migration and docking of the centriole to the plasma membrane. Also acts as a positive regulator of hedgehog signaling and regulates ciliary function. The protein is Ras-related protein Rab-34 of Mus musculus (Mouse).